The chain runs to 272 residues: Shikimate dehydrogenase (NADP(+)) (272 aa).

Residues 14–16 and T61 contribute to the shikimate site; that span reads SKS. K65 acts as the Proton acceptor in catalysis. Residue E77 coordinates NADP(+). Shikimate-binding residues include N86 and D102. Residues 126-130, 149-154, and M213 contribute to the NADP(+) site; these read GAGGA and NRTVSR. Y215 provides a ligand contact to shikimate. G237 contributes to the NADP(+) binding site.

This sequence belongs to the shikimate dehydrogenase family. Homodimer.

It carries out the reaction shikimate + NADP(+) = 3-dehydroshikimate + NADPH + H(+). Its pathway is metabolic intermediate biosynthesis; chorismate biosynthesis; chorismate from D-erythrose 4-phosphate and phosphoenolpyruvate: step 4/7. Its function is as follows. Involved in the biosynthesis of the chorismate, which leads to the biosynthesis of aromatic amino acids. Catalyzes the reversible NADPH linked reduction of 3-dehydroshikimate (DHSA) to yield shikimate (SA). This chain is Shikimate dehydrogenase (NADP(+)), found in Escherichia coli O45:K1 (strain S88 / ExPEC).